The sequence spans 690 residues: Elongation factor G (690 aa).

The tr-type G domain maps to 8–283 (EDYRNFGIMA…AVVDFLPSPL (276 aa)). GTP is bound by residues 17–24 (AHIDAGKT), 81–85 (DTPGH), and 135–138 (NKMD).

It belongs to the TRAFAC class translation factor GTPase superfamily. Classic translation factor GTPase family. EF-G/EF-2 subfamily.

It is found in the cytoplasm. In terms of biological role, catalyzes the GTP-dependent ribosomal translocation step during translation elongation. During this step, the ribosome changes from the pre-translocational (PRE) to the post-translocational (POST) state as the newly formed A-site-bound peptidyl-tRNA and P-site-bound deacylated tRNA move to the P and E sites, respectively. Catalyzes the coordinated movement of the two tRNA molecules, the mRNA and conformational changes in the ribosome. The sequence is that of Elongation factor G from Nitrobacter hamburgensis (strain DSM 10229 / NCIMB 13809 / X14).